A 399-amino-acid polypeptide reads, in one-letter code: MGIVERIKEIEAEMARTQKNKATEYHLGQLKAKIAKLRTQLLEPPKGSSGGGDGFEVTKYGHGRVALIGFPSVGKSTLLTMLTGTHSEAASYEFTTLTCIPGVIHYNDTKIQLLDLPGIIEGASEGKGRGRQVIAVAKSSDLVLMVLDASKSEGHRQILTKELEAVGLRLNKRPPQIYFKKKKTGGISFNTTTPLTRIDEKLCYQILHEYKIHNAEVLFREDATVDDFIDVVEGNRKYIKCVYVYNKIDVVGIDDVDRLARQPNSIVISCNLKLNLDRLLARMWDEMGLVRVYSKPQSQQPDFDEPFVLSADRGGCTVEDFCNQVHRTLVKDMKYALVWGTSARHYPQHCGLFHHLEDEDVVQIVKKKVREEGGRGRFKSHSNAPARIADREKKAPLKQ.

The region spanning Gly-63–Gly-288 is the OBG-type G domain. Residues Gly-69–Ser-76, Asp-115–Ile-119, and Asn-246–Asp-249 contribute to the GTP site. The region spanning Gly-288–Lys-366 is the TGS domain. The segment at Glu-372–Gln-399 is disordered. Basic and acidic residues predominate over residues Ile-388–Gln-399.

The protein belongs to the TRAFAC class OBG-HflX-like GTPase superfamily. OBG GTPase family.

Its subcellular location is the cytoplasm. Its function is as follows. Binds GDP and GTP, and has low GTPase activity. In Arabidopsis thaliana (Mouse-ear cress), this protein is Developmentally-regulated G-protein 2 (DRG2).